We begin with the raw amino-acid sequence, 514 residues long: 1-pyrroline-5-carboxylate dehydrogenase (514 aa).

Residues E286 and C320 contribute to the active site.

This sequence belongs to the aldehyde dehydrogenase family. RocA subfamily.

It carries out the reaction L-glutamate 5-semialdehyde + NAD(+) + H2O = L-glutamate + NADH + 2 H(+). Its pathway is amino-acid degradation; L-proline degradation into L-glutamate; L-glutamate from L-proline: step 2/2. The sequence is that of 1-pyrroline-5-carboxylate dehydrogenase from Staphylococcus saprophyticus subsp. saprophyticus (strain ATCC 15305 / DSM 20229 / NCIMB 8711 / NCTC 7292 / S-41).